We begin with the raw amino-acid sequence, 539 residues long: Lysophospholipid acyltransferase LPEAT2 (539 aa).

Residues 93–113 (LVICLPIALIRLVLFAASLAV) form a helical membrane-spanning segment. Residues 178–183 (HVSYIE) carry the HXXXXD motif motif. EF-hand domains lie at 426-455 (KRIF…VLTQ), 457-492 (LFKQ…TIPN), and 493-528 (LNKD…NPLL). Ca(2+) contacts are provided by aspartate 470, aspartate 472, aspartate 474, tyrosine 476, glutamate 481, aspartate 506, aspartate 508, aspartate 510, arginine 512, and aspartate 517.

The protein belongs to the 1-acyl-sn-glycerol-3-phosphate acyltransferase family.

It localises to the golgi apparatus membrane. It is found in the late endosome membrane. It carries out the reaction a 1-acyl-sn-glycero-3-phosphoethanolamine + an acyl-CoA = a 1,2-diacyl-sn-glycero-3-phosphoethanolamine + CoA. It catalyses the reaction a 1-acyl-sn-glycero-3-phosphocholine + an acyl-CoA = a 1,2-diacyl-sn-glycero-3-phosphocholine + CoA. The catalysed reaction is a 1-acyl-sn-glycero-3-phospho-L-serine + an acyl-CoA = a 1,2-diacyl-sn-glycero-3-phospho-L-serine + CoA. It participates in lipid metabolism; phospholipid metabolism. In terms of biological role, possesses acyl-CoA-dependent lysophospholipid acyltransferase activity with a subset of lysophospholipids as substrates. Exhibits strong acylation activity on lysophosphatidylethanolamine (LPE), and lower activity on lysophosphatidylcholine (LPC) and lysophosphatidylserine (LPS). Exhibits acylation activity on both LPE and LPC. Has a preference for 18:1-LPE over 16:0-LPE as acceptor. Palmitoyl-CoA (16:0-CoA) is a better acyl donor than oleoyl-CoA (18:1-CoA). Among several different acyl-CoA species the best acyl donor is eicosanoyl-CoA (20:0-CoA). Activity is calcium-independent. Its activity is essential for maintaining adequate levels of phosphatidylethanolamine (PE), LPE and LPC in the cells, which is crucial for plant growth regulation. The chain is Lysophospholipid acyltransferase LPEAT2 from Arabidopsis thaliana (Mouse-ear cress).